A 370-amino-acid chain; its full sequence is 3-dehydroquinate synthase (370 aa).

NAD(+) is bound by residues 108-112 (GVVGD), 132-133 (TT), lysine 145, and lysine 154. 3 residues coordinate Zn(2+): glutamate 187, histidine 250, and histidine 268.

It belongs to the sugar phosphate cyclases superfamily. Dehydroquinate synthase family. It depends on Co(2+) as a cofactor. Requires Zn(2+) as cofactor. NAD(+) is required as a cofactor.

Its subcellular location is the cytoplasm. It carries out the reaction 7-phospho-2-dehydro-3-deoxy-D-arabino-heptonate = 3-dehydroquinate + phosphate. It functions in the pathway metabolic intermediate biosynthesis; chorismate biosynthesis; chorismate from D-erythrose 4-phosphate and phosphoenolpyruvate: step 2/7. Its function is as follows. Catalyzes the conversion of 3-deoxy-D-arabino-heptulosonate 7-phosphate (DAHP) to dehydroquinate (DHQ). This Caulobacter vibrioides (strain NA1000 / CB15N) (Caulobacter crescentus) protein is 3-dehydroquinate synthase.